The sequence spans 126 residues: Large ribosomal subunit protein bL12 (126 aa).

It belongs to the bacterial ribosomal protein bL12 family. Homodimer. Part of the ribosomal stalk of the 50S ribosomal subunit. Forms a multimeric L10(L12)X complex, where L10 forms an elongated spine to which 2 to 4 L12 dimers bind in a sequential fashion. Binds GTP-bound translation factors.

Its function is as follows. Forms part of the ribosomal stalk which helps the ribosome interact with GTP-bound translation factors. Is thus essential for accurate translation. The sequence is that of Large ribosomal subunit protein bL12 from Nitrosococcus oceani (strain ATCC 19707 / BCRC 17464 / JCM 30415 / NCIMB 11848 / C-107).